The primary structure comprises 382 residues: uncharacterized protein (382 aa).

Transmembrane regions (helical) follow at residues 14–34, 45–65, 79–99, 102–122, 131–151, 157–177, 204–224, 235–255, 270–290, 291–311, 325–345, and 348–368; these read GLLL…LWLA, VVSS…GYVI, FIFA…SWLA, FVAG…LMCS, LLAA…LLVS, LMSV…PLLF, LGVN…GLMP, ASIG…QWPI, VQVF…AMAP, ALFI…AWAC, ALLL…AMLM, and FSDN…LLML.

It belongs to the major facilitator superfamily. YcaD (TC 2.A.1.26) family.

It localises to the cell inner membrane. This is an uncharacterized protein from Shigella dysenteriae serotype 1 (strain Sd197).